Here is a 184-residue protein sequence, read N- to C-terminus: Thymidine kinase (184 aa).

Residues 10–17 (GPMYSGKT) and 83–86 (DEVQ) contribute to the ATP site. E84 (proton acceptor) is an active-site residue. Positions 140, 143, 173, and 176 each coordinate Zn(2+).

The protein belongs to the thymidine kinase family. In terms of assembly, homotetramer.

The protein resides in the cytoplasm. The catalysed reaction is thymidine + ATP = dTMP + ADP + H(+). The chain is Thymidine kinase from Thermotoga sp. (strain RQ2).